We begin with the raw amino-acid sequence, 621 residues long: tRNA uridine 5-carboxymethylaminomethyl modification enzyme MnmG (621 aa).

8-13 lines the FAD pocket; that stretch reads GAGHAG. NAD(+) is bound at residue 269–283; it reads GPRYCPSVEDKIFRF.

The protein belongs to the MnmG family. In terms of assembly, homodimer. Heterotetramer of two MnmE and two MnmG subunits. The cofactor is FAD.

The protein resides in the cytoplasm. Functionally, NAD-binding protein involved in the addition of a carboxymethylaminomethyl (cmnm) group at the wobble position (U34) of certain tRNAs, forming tRNA-cmnm(5)s(2)U34. The chain is tRNA uridine 5-carboxymethylaminomethyl modification enzyme MnmG from Chlorobium chlorochromatii (strain CaD3).